Reading from the N-terminus, the 790-residue chain is Probable copper-transporting ATPase SynA (790 aa).

Topologically, residues 1-105 are cytoplasmic; it reads MPAAIVHSAD…IPPLQQQRLQ (105 aa). One can recognise an HMA domain in the interval 14-81; it reads TSILVEVEGM…EITGLGFRAQ (68 aa). Cysteine 25 and cysteine 28 together coordinate Cu(+). A helical membrane pass occupies residues 106 to 127; it reads LAIAAFLLIVSSWGHLGHWLDH. Over 128–136 the chain is Extracellular; it reads PLPGTDQLW. Residues 137 to 156 form a helical membrane-spanning segment; sequence FHALLATWALLGPGRSILQA. Over 157–163 the chain is Cytoplasmic; the sequence is GWQGLRC. The helical transmembrane segment at 164-184 threads the bilayer; it reads GAPNMNSLVLLGTGSAYLASL. The Extracellular segment spans residues 185 to 198; the sequence is VALLWPQLGWVCFF. The chain crosses the membrane as a helical span at residues 199–219; that stretch reads DEPVMLLGFILLGRTLEEQAR. Residues 220-358 are Cytoplasmic-facing; it reads FRSQAALQNL…KAPVQRFADA (139 aa). Residues 359-381 traverse the membrane as a helical segment; it reads IAGRFVYGVCAIAALTFGFWATL. Over 382–420 the chain is Extracellular; sequence GSRWWPQVLQQPLPGLLIHAPHHGMEMAHPHSHSPLLLA. A helical membrane pass occupies residues 421–438; sequence LTLAISVLVVACPCALGL. At 439-723 the chain is on the cytoplasmic side; the sequence is ATPTAILVAT…NLSQMGLRTI (285 aa). The active-site 4-aspartylphosphate intermediate is aspartate 476. Residues aspartate 669 and aspartate 673 each coordinate Mg(2+). The helical transmembrane segment at 724–743 threads the bilayer; it reads RQNLTWALGYNVVMLPLAAG. At 744 to 755 the chain is on the extracellular side; the sequence is AFLPAYGLALTP. A helical membrane pass occupies residues 756–774; that stretch reads AIAGACMAVSSLAVVSNSL. Over 775–790 the chain is Cytoplasmic; it reads LLRYWFRRSLNHSVSV.

This sequence belongs to the cation transport ATPase (P-type) (TC 3.A.3) family. Type IB subfamily.

It localises to the cell membrane. The catalysed reaction is Cu(+)(in) + ATP + H2O = Cu(+)(out) + ADP + phosphate + H(+). Involved in copper transport. This is Probable copper-transporting ATPase SynA (synA) from Synechococcus elongatus (strain ATCC 33912 / PCC 7942 / FACHB-805) (Anacystis nidulans R2).